The chain runs to 129 residues: LSLSGTAADCLSGWSSYEGHCYKPFNELKNWADAEKFCTEQHAGGHLVSFQSSEEADFVVKLAFQTFDHSIFWMGLSNVWNQCNWQWSNAAMLRYKAWAEESYCVYFKSTNNKWRSRSCRMMANFVCEF.

Residues 1 to 8 (LSLSGTAA) form the signal peptide. 3 disulfides stabilise this stretch: Cys10-Cys21, Cys38-Cys127, and Cys104-Cys119. Positions 17–128 (YEGHCYKPFN…CRMMANFVCE (112 aa)) constitute a C-type lectin domain.

The protein belongs to the snaclec family. Heterodimer of subunits A and B3; disulfide-linked. As to expression, expressed by the venom gland.

The protein resides in the secreted. In terms of biological role, anticoagulant protein which binds to the gamma-carboxyglutamic acid-domain regions of factors IX (F9) and factor X (F10) in the presence of calcium with a 1 to 1 stoichiometry. The protein is Snaclec coagulation factor IX/factor X-binding protein subunit B3 of Trimeresurus stejnegeri (Chinese green tree viper).